A 433-amino-acid chain; its full sequence is uncharacterized protein (433 aa).

The signal sequence occupies residues 1–26 (MTRRAEFEMGLFVILQSMFLISLCSS). N-linked (GlcNAc...) asparagine glycosylation is found at Asn59, Asn72, Asn125, Asn159, Asn210, Asn275, Asn282, and Asn323. Ala405 carries the GPI-anchor amidated alanine lipid modification. The propeptide at 406 to 433 (SSQPRLHDEGVTRLVIFVLSMLLVMLLS) is removed in mature form.

It is found in the cell membrane. This is an uncharacterized protein from Arabidopsis thaliana (Mouse-ear cress).